The sequence spans 72 residues: Long neurotoxin OH-5 (72 aa).

5 disulfides stabilise this stretch: cysteine 3-cysteine 22, cysteine 15-cysteine 43, cysteine 28-cysteine 32, cysteine 47-cysteine 58, and cysteine 59-cysteine 64.

The protein belongs to the three-finger toxin family. Long-chain subfamily. Type II alpha-neurotoxin sub-subfamily. As to expression, expressed by the venom gland.

The protein localises to the secreted. Its function is as follows. Binds with high affinity to muscular (alpha-1/CHRNA1) and neuronal (alpha-7/CHRNA7) nicotinic acetylcholine receptor (nAChR) and inhibits acetylcholine from binding to the receptor, thereby impairing neuromuscular and neuronal transmission. In Ophiophagus hannah (King cobra), this protein is Long neurotoxin OH-5.